The following is a 213-amino-acid chain: Holliday junction branch migration complex subunit RuvA (213 aa).

The segment at 1-63 (MIGMLTGRVA…EDAFKLYGFL (63 aa)) is domain I. The segment at 64 to 142 (DDIDRAWFVH…PTGRSFSIGL (79 aa)) is domain II. Residues 143–160 (PVHSDDGTTGGAPVAPAG) are flexible linker. Residues 161–213 (GDSLAREDAVSALVNLGYNESQARQAVAKILRDADSEAPLGDVIRLSLKELAA) are domain III.

The protein belongs to the RuvA family. As to quaternary structure, homotetramer. Forms an RuvA(8)-RuvB(12)-Holliday junction (HJ) complex. HJ DNA is sandwiched between 2 RuvA tetramers; dsDNA enters through RuvA and exits via RuvB. An RuvB hexamer assembles on each DNA strand where it exits the tetramer. Each RuvB hexamer is contacted by two RuvA subunits (via domain III) on 2 adjacent RuvB subunits; this complex drives branch migration. In the full resolvosome a probable DNA-RuvA(4)-RuvB(12)-RuvC(2) complex forms which resolves the HJ.

Its subcellular location is the cytoplasm. In terms of biological role, the RuvA-RuvB-RuvC complex processes Holliday junction (HJ) DNA during genetic recombination and DNA repair, while the RuvA-RuvB complex plays an important role in the rescue of blocked DNA replication forks via replication fork reversal (RFR). RuvA specifically binds to HJ cruciform DNA, conferring on it an open structure. The RuvB hexamer acts as an ATP-dependent pump, pulling dsDNA into and through the RuvAB complex. HJ branch migration allows RuvC to scan DNA until it finds its consensus sequence, where it cleaves and resolves the cruciform DNA. In Maricaulis maris (strain MCS10) (Caulobacter maris), this protein is Holliday junction branch migration complex subunit RuvA.